The primary structure comprises 130 residues: S-adenosylmethionine decarboxylase proenzyme (130 aa).

Serine 63 (schiff-base intermediate with substrate; via pyruvic acid) is an active-site residue. Serine 63 carries the post-translational modification Pyruvic acid (Ser); by autocatalysis. Histidine 68 (proton acceptor; for processing activity) is an active-site residue. Cysteine 83 functions as the Proton donor; for catalytic activity in the catalytic mechanism.

This sequence belongs to the prokaryotic AdoMetDC family. Type 1 subfamily. Heterotetramer of two alpha and two beta chains arranged as a dimer of alpha/beta heterodimers. The cofactor is pyruvate. In terms of processing, is synthesized initially as an inactive proenzyme. Formation of the active enzyme involves a self-maturation process in which the active site pyruvoyl group is generated from an internal serine residue via an autocatalytic post-translational modification. Two non-identical subunits are generated from the proenzyme in this reaction, and the pyruvate is formed at the N-terminus of the alpha chain, which is derived from the carboxyl end of the proenzyme. The post-translation cleavage follows an unusual pathway, termed non-hydrolytic serinolysis, in which the side chain hydroxyl group of the serine supplies its oxygen atom to form the C-terminus of the beta chain, while the remainder of the serine residue undergoes an oxidative deamination to produce ammonia and the pyruvoyl group blocking the N-terminus of the alpha chain.

The enzyme catalyses S-adenosyl-L-methionine + H(+) = S-adenosyl 3-(methylsulfanyl)propylamine + CO2. Its pathway is amine and polyamine biosynthesis; S-adenosylmethioninamine biosynthesis; S-adenosylmethioninamine from S-adenosyl-L-methionine: step 1/1. Catalyzes the decarboxylation of S-adenosylmethionine to S-adenosylmethioninamine (dcAdoMet), the propylamine donor required for the synthesis of the polyamines spermine and spermidine from the diamine putrescine. In Thermotoga petrophila (strain ATCC BAA-488 / DSM 13995 / JCM 10881 / RKU-1), this protein is S-adenosylmethionine decarboxylase proenzyme.